Consider the following 253-residue polypeptide: Proteasome subunit alpha type-3 (253 aa).

A disordered region spans residues Glu-230–His-253. Residues Leu-231 to His-253 are compositionally biased toward basic and acidic residues. Ser-248 carries the phosphoserine modification.

This sequence belongs to the peptidase T1A family. In terms of assembly, the 26S proteasome consists of a 20S proteasome core and two 19S regulatory subunits. The 20S proteasome core is composed of 28 subunits that are arranged in four stacked rings, resulting in a barrel-shaped structure. The two end rings are each formed by seven alpha subunits, and the two central rings are each formed by seven beta subunits. The catalytic chamber with the active sites is on the inside of the barrel. Interacts with ntc.

It localises to the cytoplasm. Its subcellular location is the nucleus. In terms of biological role, the proteasome is a multicatalytic proteinase complex which is characterized by its ability to cleave peptides with Arg, Phe, Tyr, Leu, and Glu adjacent to the leaving group at neutral or slightly basic pH. The proteasome has an ATP-dependent proteolytic activity. The protein is Proteasome subunit alpha type-3 (Prosalpha7) of Drosophila melanogaster (Fruit fly).